The primary structure comprises 396 residues: Chaperone protein DnaJ 1 (396 aa).

The region spanning 10 to 75 (DYYKVLGVPK…KKRKEYDEAR (66 aa)) is the J domain. The span at 127-137 (LFNRGGAGPGT) shows a compositional bias: gly residues. The tract at residues 127–149 (LFNRGGAGPGTGTRTQPRRGQDI) is disordered. The CR-type zinc-finger motif lies at 163–241 (GATVPLRMSS…CKGSGRAKSS (79 aa)). The Zn(2+) site is built by Cys-176, Cys-179, Cys-192, Cys-195, Cys-215, Cys-218, Cys-229, and Cys-232. 4 CXXCXGXG motif repeats span residues 176 to 183 (CKACSGTG), 192 to 199 (CPTCVGTG), 215 to 222 (CPDCKGRG), and 229 to 236 (CEICKGSG).

Belongs to the DnaJ family. As to quaternary structure, homodimer. Requires Zn(2+) as cofactor.

Its subcellular location is the cytoplasm. Participates actively in the response to hyperosmotic and heat shock by preventing the aggregation of stress-denatured proteins and by disaggregating proteins, also in an autonomous, DnaK-independent fashion. Unfolded proteins bind initially to DnaJ; upon interaction with the DnaJ-bound protein, DnaK hydrolyzes its bound ATP, resulting in the formation of a stable complex. GrpE releases ADP from DnaK; ATP binding to DnaK triggers the release of the substrate protein, thus completing the reaction cycle. Several rounds of ATP-dependent interactions between DnaJ, DnaK and GrpE are required for fully efficient folding. Also involved, together with DnaK and GrpE, in the DNA replication of plasmids through activation of initiation proteins. This Streptomyces avermitilis (strain ATCC 31267 / DSM 46492 / JCM 5070 / NBRC 14893 / NCIMB 12804 / NRRL 8165 / MA-4680) protein is Chaperone protein DnaJ 1.